The sequence spans 278 residues: Urease accessory protein UreD (278 aa).

It belongs to the UreD family. In terms of assembly, ureD, UreF and UreG form a complex that acts as a GTP-hydrolysis-dependent molecular chaperone, activating the urease apoprotein by helping to assemble the nickel containing metallocenter of UreC. The UreE protein probably delivers the nickel.

It localises to the cytoplasm. Its function is as follows. Required for maturation of urease via the functional incorporation of the urease nickel metallocenter. The polypeptide is Urease accessory protein UreD (Staphylococcus aureus (strain JH1)).